The sequence spans 368 residues: Chorismate synthase (368 aa).

Arginine 46 serves as a coordination point for NADP(+). FMN is bound by residues 124 to 126 (RAS), glycine 284, 299 to 303 (KPTPS), and arginine 326.

The protein belongs to the chorismate synthase family. It depends on FMNH2 as a cofactor.

It catalyses the reaction 5-O-(1-carboxyvinyl)-3-phosphoshikimate = chorismate + phosphate. It functions in the pathway metabolic intermediate biosynthesis; chorismate biosynthesis; chorismate from D-erythrose 4-phosphate and phosphoenolpyruvate: step 7/7. Its function is as follows. Catalyzes the anti-1,4-elimination of the C-3 phosphate and the C-6 proR hydrogen from 5-enolpyruvylshikimate-3-phosphate (EPSP) to yield chorismate, which is the branch point compound that serves as the starting substrate for the three terminal pathways of aromatic amino acid biosynthesis. This reaction introduces a second double bond into the aromatic ring system. The polypeptide is Chorismate synthase (Pyrobaculum arsenaticum (strain DSM 13514 / JCM 11321 / PZ6)).